Consider the following 154-residue polypeptide: uncharacterized protein (154 aa).

2 disordered regions span residues 23–63 and 79–154; these read ERVG…VVLK and IKAA…DENE. Over residues 43-56 the composition is skewed to acidic residues; the sequence is PDEDGDHSDKEDEQ. Serine 50 bears the Phosphoserine mark. Lysine 108 is modified (N6-acetyllysine). Serine 146 carries the post-translational modification Phosphoserine.

This is an uncharacterized protein from Homo sapiens (Human).